Reading from the N-terminus, the 274-residue chain is Large ribosomal subunit protein uL2 (274 aa).

Disordered regions lie at residues lysine 21–lysine 59 and valine 223–glycine 274. Low complexity predominate over residues serine 32–glycine 42. Residues asparagine 45 to lysine 59 are compositionally biased toward basic residues. The segment covering lysine 263–glycine 274 has biased composition (basic and acidic residues).

The protein belongs to the universal ribosomal protein uL2 family. As to quaternary structure, part of the 50S ribosomal subunit. Forms a bridge to the 30S subunit in the 70S ribosome.

Its function is as follows. One of the primary rRNA binding proteins. Required for association of the 30S and 50S subunits to form the 70S ribosome, for tRNA binding and peptide bond formation. It has been suggested to have peptidyltransferase activity; this is somewhat controversial. Makes several contacts with the 16S rRNA in the 70S ribosome. This Wolbachia sp. subsp. Drosophila simulans (strain wRi) protein is Large ribosomal subunit protein uL2.